Reading from the N-terminus, the 539-residue chain is Dihydrolipoyllysine-residue acetyltransferase component 3 of pyruvate dehydrogenase complex, mitochondrial (539 aa).

The transit peptide at 1–102 (MAYASRIINH…SCLMQSARGF (102 aa)) directs the protein to the mitochondrion. The Lipoyl-binding domain occupies 111 to 187 (HQEIGMPSLS…QVGEVIAITV (77 aa)). At lysine 152 the chain carries N6-lipoyllysine. The segment at 195 to 247 (KFKDYTPSSTADAAPTKAEPTPAPPKEEKVKQPSSPPEPKASKPSTPPTGDRV) is disordered. The span at 204–214 (TADAAPTKAEP) shows a compositional bias: low complexity. In terms of domain architecture, Peripheral subunit-binding (PSBD) spans 248-285 (FASPLARKLAEDNNVPLSDIEGTGPEGRIVKADIDEYL). Active-site residues include histidine 512 and aspartate 516.

It belongs to the 2-oxoacid dehydrogenase family. (R)-lipoate is required as a cofactor.

It localises to the mitochondrion matrix. The catalysed reaction is N(6)-[(R)-dihydrolipoyl]-L-lysyl-[protein] + acetyl-CoA = N(6)-[(R)-S(8)-acetyldihydrolipoyl]-L-lysyl-[protein] + CoA. Functionally, the pyruvate dehydrogenase complex catalyzes the overall conversion of pyruvate to acetyl-CoA and CO(2). It contains multiple copies of three enzymatic components: pyruvate dehydrogenase (E1), dihydrolipoamide acetyltransferase (E2) and lipoamide dehydrogenase (E3). This is Dihydrolipoyllysine-residue acetyltransferase component 3 of pyruvate dehydrogenase complex, mitochondrial from Arabidopsis thaliana (Mouse-ear cress).